The chain runs to 249 residues: Adapter protein MecA (249 aa).

It belongs to the MecA family. As to quaternary structure, homodimer.

In terms of biological role, enables the recognition and targeting of unfolded and aggregated proteins to the ClpC protease or to other proteins involved in proteolysis. The protein is Adapter protein MecA of Streptococcus thermophilus (strain CNRZ 1066).